Consider the following 470-residue polypeptide: MLKEKLIIIITLVMLLCACDIQEQSTQLAQIKAQNKIRVGTLASASNYYQAVQGEQGFEYELSQAFADYLGVELEIVPFFNLSDMFARLQSGDLDLIASGLTYNKTRAQQYRFGPTYRTISQKLVYKQGIERPRDYDDLTGNLMVIAKSSHSLTLQKVKKSNPELNWSETEEFDEEELLQAVIDGEIDYTLADTHTLSLFRRYHPNLSIGFSITHNDPIAWMLRKSNDDSLYALLVPFFGEAKQNNQLYVLEEKYFGHVRQFNYVNTLAYIEAIKETLPKYQPWFEQYAGTLDWRLLAALSYQESMWNPRAKSPTGVRGIMMLTRNTAKQVGVTNRLEPEQNIRGGAKYLSKLIKRIPDRIPQPDRTWLALAAYNVGWGHVNDARIITKQQGASPDKWADVKKRLPLLIKKRYYRKTRYGYSRGDVAVSYVDNIRRYYDALVWLDENNAIEEKPEAPVVAPKIGDEVEAK.

An N-terminal signal peptide occupies residues 1 to 21 (MLKEKLIIIITLVMLLCACDI). The segment at 22–259 (QEQSTQLAQI…VLEEKYFGHV (238 aa)) is non-LT domain. The segment at 260-470 (RQFNYVNTLA…PKIGDEVEAK (211 aa)) is LT domain. Residue Glu304 is part of the active site.

The protein in the N-terminal section; belongs to the bacterial solute-binding protein 3 family. It in the C-terminal section; belongs to the transglycosylase Slt family.

It localises to the cell outer membrane. It catalyses the reaction Exolytic cleavage of the (1-&gt;4)-beta-glycosidic linkage between N-acetylmuramic acid (MurNAc) and N-acetylglucosamine (GlcNAc) residues in peptidoglycan, from either the reducing or the non-reducing ends of the peptidoglycan chains, with concomitant formation of a 1,6-anhydrobond in the MurNAc residue.. Murein-degrading enzyme that degrades murein glycan strands and insoluble, high-molecular weight murein sacculi, with the concomitant formation of a 1,6-anhydromuramoyl product. Lytic transglycosylases (LTs) play an integral role in the metabolism of the peptidoglycan (PG) sacculus. Their lytic action creates space within the PG sacculus to allow for its expansion as well as for the insertion of various structures such as secretion systems and flagella. The chain is Membrane-bound lytic murein transglycosylase F from Pseudoalteromonas translucida (strain TAC 125).